The chain runs to 134 residues: Ribosome-binding factor A (134 aa).

Belongs to the RbfA family. In terms of assembly, monomer. Binds 30S ribosomal subunits, but not 50S ribosomal subunits or 70S ribosomes.

It is found in the cytoplasm. Functionally, one of several proteins that assist in the late maturation steps of the functional core of the 30S ribosomal subunit. Associates with free 30S ribosomal subunits (but not with 30S subunits that are part of 70S ribosomes or polysomes). Required for efficient processing of 16S rRNA. May interact with the 5'-terminal helix region of 16S rRNA. The polypeptide is Ribosome-binding factor A (Synechococcus sp. (strain CC9311)).